The following is a 244-amino-acid chain: Chaperone protein FimB/FhaD (244 aa).

The signal sequence occupies residues 1-24 (MARWRRRLGVAALGAAMLASLAPA).

Belongs to the periplasmic pilus chaperone family.

It localises to the periplasm. In terms of biological role, required for the biogenesis of the filamentous hemagglutinin and the fimbria. This is Chaperone protein FimB/FhaD (fimB) from Bordetella pertussis (strain Tohama I / ATCC BAA-589 / NCTC 13251).